A 277-amino-acid polypeptide reads, in one-letter code: Purine nucleoside phosphorylase 2 (277 aa).

Residues His65, 85 to 87 (RGH), and Ala117 contribute to the phosphate site. Glu197 provides a ligand contact to a purine D-ribonucleoside. Ser216 contacts phosphate. Position 239 (Asn239) interacts with a purine D-ribonucleoside.

Belongs to the PNP/MTAP phosphorylase family. As to quaternary structure, hexamer. Dimer of trimers.

It carries out the reaction a purine D-ribonucleoside + phosphate = a purine nucleobase + alpha-D-ribose 1-phosphate. It participates in purine metabolism; xanthosine degradation. Its pathway is purine metabolism; purine nucleoside salvage. Rapidly inactivated by p-chloromercuriphenylsulfonic acid (p-CMB). Dithiothreitol incubation restores the activity. Functionally, the purine nucleoside phosphorylases catalyze the phosphorolytic breakdown of the N-glycosidic bond in the beta-(deoxy)ribonucleoside molecules, with the formation of the corresponding free purine bases and pentose-1-phosphate. This protein can degrade all purine nucleosides including xanthosine, inosine and guanosine, but cannot cleave adenosine, deoxyadenosine or hypoxanthine arabinoside. Has a preference for the neutral over the monoanionic form of xanthosine. This Escherichia coli (strain K12) protein is Purine nucleoside phosphorylase 2 (xapA).